A 349-amino-acid chain; its full sequence is UDP-galactose/UDP-glucose transporter 4 (349 aa).

The next 8 membrane-spanning stretches (helical) occupy residues 23 to 43 (WQQF…NGIC), 56 to 76 (GWYF…MYGF), 115 to 135 (IMFK…IPGL), 140 to 160 (PVHE…FTLA), 167 to 187 (NFSI…AFLG), 205 to 225 (MLFC…ILTG), 248 to 268 (AMAT…FGAA), and 293 to 313 (LTEQ…LKMV). The disordered stretch occupies residues 316 to 349 (PNPNPKSSGSGQTPGKLERVKFEKEDDEESRPLV). Acidic residues predominate over residues 340–349 (EDDEESRPLV).

This sequence belongs to the nucleotide-sugar transporter family. UDP-galactose:UMP antiporter (TC 2.A.7.11) subfamily.

It localises to the membrane. Sugar transporter involved in the transport of nucleotide-sugars from cytoplasm into the Golgi and/or the endoplasmic reticulum. In Arabidopsis thaliana (Mouse-ear cress), this protein is UDP-galactose/UDP-glucose transporter 4.